Reading from the N-terminus, the 264-residue chain is Chymotrypsin-like protease CTRL-1 (264 aa).

Positions 1–18 are cleaved as a signal peptide; it reads MLLLSLTLSLVLLGSSWG. A propeptide spans 19–33 (activation peptide); it reads CGIPAIKPALSFSQR. Cystine bridges form between C19–C141, C60–C76, C155–C220, C187–C201, and C210–C239. The region spanning 34 to 262 is the Peptidase S1 domain; that stretch reads IVNGENAVLG…FSTWINQVIA (229 aa). Residue H75 is the Charge relay system of the active site. N114 carries an N-linked (GlcNAc...) asparagine glycan. D121 serves as the catalytic Charge relay system. S214 functions as the Charge relay system in the catalytic mechanism.

This sequence belongs to the peptidase S1 family.

This is Chymotrypsin-like protease CTRL-1 (CTRL) from Homo sapiens (Human).